The following is a 449-amino-acid chain: uncharacterized protein (449 aa).

Residues 3-61 form the TRAM domain; sequence VWQQGATIELRIDSLSHTGEGVGRWQDRVVFVADTVPGDRLRVRLTHVKRQYAHGKVLE. Residues Cys74, Cys80, Cys83, and Cys161 each coordinate [4Fe-4S] cluster. Residues Gln283, Tyr312, Glu333, and Asp378 each contribute to the S-adenosyl-L-methionine site. Residue Cys405 is the Nucleophile of the active site.

It belongs to the class I-like SAM-binding methyltransferase superfamily. RNA M5U methyltransferase family.

This is an uncharacterized protein from Thermosynechococcus vestitus (strain NIES-2133 / IAM M-273 / BP-1).